The chain runs to 288 residues: ATP synthase gamma chain (288 aa).

It belongs to the ATPase gamma chain family. F-type ATPases have 2 components, CF(1) - the catalytic core - and CF(0) - the membrane proton channel. CF(1) has five subunits: alpha(3), beta(3), gamma(1), delta(1), epsilon(1). CF(0) has three main subunits: a, b and c.

It localises to the cell inner membrane. Its function is as follows. Produces ATP from ADP in the presence of a proton gradient across the membrane. The gamma chain is believed to be important in regulating ATPase activity and the flow of protons through the CF(0) complex. The sequence is that of ATP synthase gamma chain from Aliivibrio salmonicida (strain LFI1238) (Vibrio salmonicida (strain LFI1238)).